The primary structure comprises 1152 residues: DNA-directed RNA polymerase subunit beta (1152 aa).

This sequence belongs to the RNA polymerase beta chain family. As to quaternary structure, the RNAP catalytic core consists of 2 alpha, 1 beta, 1 beta' and 1 omega subunit. When a sigma factor is associated with the core the holoenzyme is formed, which can initiate transcription.

It catalyses the reaction RNA(n) + a ribonucleoside 5'-triphosphate = RNA(n+1) + diphosphate. Its function is as follows. DNA-dependent RNA polymerase catalyzes the transcription of DNA into RNA using the four ribonucleoside triphosphates as substrates. This is DNA-directed RNA polymerase subunit beta from Deinococcus geothermalis (strain DSM 11300 / CIP 105573 / AG-3a).